The primary structure comprises 21 residues: Maculatin-1.1 (21 aa).

Phe21 carries the post-translational modification Phenylalanine amide.

As to expression, expressed by the skin dorsal glands.

The protein resides in the secreted. Its function is as follows. Maculatin-1.1 shows significant antibacterial activity against Gram-positive bacteria, less against Gram-negative bacteria. Maculatin-1.1.1 is inactive. This is Maculatin-1.1 from Ranoidea genimaculata (Brown-spotted tree frog).